Consider the following 403-residue polypeptide: Argininosuccinate synthase (403 aa).

ATP contacts are provided by residues 10–18 (AYSGGVDTS) and alanine 38. Tyrosine 89 contacts L-citrulline. Position 119 (glycine 119) interacts with ATP. Residues threonine 121, asparagine 125, and aspartate 126 each contribute to the L-aspartate site. L-citrulline is bound at residue asparagine 125. Positions 129, 177, 186, 262, and 274 each coordinate L-citrulline.

The protein belongs to the argininosuccinate synthase family. Type 1 subfamily. As to quaternary structure, homotetramer.

The protein localises to the cytoplasm. The catalysed reaction is L-citrulline + L-aspartate + ATP = 2-(N(omega)-L-arginino)succinate + AMP + diphosphate + H(+). Its pathway is amino-acid biosynthesis; L-arginine biosynthesis; L-arginine from L-ornithine and carbamoyl phosphate: step 2/3. The protein is Argininosuccinate synthase of Parasynechococcus marenigrum (strain WH8102).